The following is a 141-amino-acid chain: Auxin-responsive protein SAUR63 (141 aa).

This sequence belongs to the ARG7 family. In terms of tissue distribution, expressed in hypocotyls, cotyledons, petioles, young rosette leaves, apical portion of inflorescence stems, stamen filaments and petals.

Its subcellular location is the cell membrane. Functionally, may promote auxin-stimulated organ elongation, such as hypocotyls, stamen filaments and petals. This is Auxin-responsive protein SAUR63 from Arabidopsis thaliana (Mouse-ear cress).